The primary structure comprises 1050 residues: Diacylglycerol kinase iota (1050 aa).

Disordered stretches follow at residues 52-73 (NPSSSAGEERGATGGSSSSGSG) and 325-356 (PQNSLKASNRKKKRTSFKRKASKRGTEQENKG). Over residues 332 to 347 (SNRKKKRTSFKRKASK) the composition is skewed to basic residues. In terms of domain architecture, DAGKc spans 367 to 502 (PLMKPLLVFV…DRWNLHVERN (136 aa)). 2 ANK repeats span residues 943 to 972 (GHCSLLHYAAKTGNGEIVKYILDHGPAELL) and 979 to 1008 (TGETALHKAACQRNRAVCQLLVDAGASLRQ). Residues 1048–1050 (TAV) carry the PDZ-binding motif.

It belongs to the eukaryotic diacylglycerol kinase family. In terms of assembly, interacts (via PDZ-binding motif) with DLG4; controls the localization of DGKI to the synapse. Interacts (via PDZ-binding motif) with DLG1. Interacts (via PDZ-binding motif) with DLG2. Interacts (via PDZ-binding motif) with DLG3. May interact with RASGRP3; involved in the regulation of RASGRP3 activity. In terms of tissue distribution, specifically expressed in brain (at protein level). Expressed in hippocampus, cerebellum, brain stem and spinal cord (at protein level). Highly expressed in hippocampus, cerebellar cortex, olfactory bulb, and olfactory tubercle and to lower extent in the cerebral cortex, caudate putamen, and thalamus. Not detected in the white matter. Also expressed in eye. As to expression, major isoform in brain (at protein level). Minor isoform in brain (at protein level). In terms of tissue distribution, expressed in brain (at protein level).

The protein localises to the cell projection. The protein resides in the axon. It is found in the dendrite. Its subcellular location is the presynapse. It localises to the postsynapse. The protein localises to the postsynaptic density. The protein resides in the synaptic cell membrane. It is found in the cytoplasmic vesicle. Its subcellular location is the secretory vesicle. It localises to the synaptic vesicle membrane. The protein localises to the cytoplasm. The protein resides in the cytosol. It is found in the nucleus. The catalysed reaction is a 1,2-diacyl-sn-glycerol + ATP = a 1,2-diacyl-sn-glycero-3-phosphate + ADP + H(+). The enzyme catalyses 1,2-di-(9Z-octadecenoyl)-sn-glycerol + ATP = 1,2-di-(9Z-octadecenoyl)-sn-glycero-3-phosphate + ADP + H(+). It carries out the reaction 1-octadecanoyl-2-(9Z,12Z)-octadecadienoyl-sn-glycerol + ATP = 1-octadecanoyl-2-(9Z,12Z-octadecadienoyl)-sn-glycero-3-phosphate + ADP + H(+). It catalyses the reaction 1-octadecanoyl-2-(5Z,8Z,11Z,14Z-eicosatetraenoyl)-sn-glycerol + ATP = 1-octadecanoyl-2-(5Z,8Z,11Z,14Z-eicosatetraenoyl)-sn-glycero-3-phosphate + ADP + H(+). It functions in the pathway lipid metabolism; glycerolipid metabolism. Its activity is regulated as follows. Activated by phosphatidylserine. Diacylglycerol kinase that converts diacylglycerol/DAG into phosphatidic acid/phosphatidate/PA and regulates the respective levels of these two bioactive lipids. Thereby, acts as a central switch between the signaling pathways activated by these second messengers with different cellular targets and opposite effects in numerous biological processes. Has probably no preference for any of the diacylglycerols in terms of the acyl chain composition, especially for the acyl chain at the sn-2 position. By controlling the diacylglycerol/DAG-mediated activation of RASGRP3, negatively regulates the Rap1 signaling pathway. May play a role in presynaptic diacylglycerol/DAG signaling and control neurotransmitter release during metabotropic glutamate receptor-dependent long-term depression. In terms of biological role, has a decreased affinity for ATP and a reduced diacylglycerol kinase activity. Has no preference for any of the diacylglycerols in terms of the acyl chain composition. Functionally, has no diacylglycerol kinase activity. The chain is Diacylglycerol kinase iota from Rattus norvegicus (Rat).